A 382-amino-acid chain; its full sequence is Anhydro-N-acetylmuramic acid kinase (382 aa).

9 to 16 (GTSLDGID) lines the ATP pocket.

This sequence belongs to the anhydro-N-acetylmuramic acid kinase family.

The catalysed reaction is 1,6-anhydro-N-acetyl-beta-muramate + ATP + H2O = N-acetyl-D-muramate 6-phosphate + ADP + H(+). It participates in amino-sugar metabolism; 1,6-anhydro-N-acetylmuramate degradation. The protein operates within cell wall biogenesis; peptidoglycan recycling. In terms of biological role, catalyzes the specific phosphorylation of 1,6-anhydro-N-acetylmuramic acid (anhMurNAc) with the simultaneous cleavage of the 1,6-anhydro ring, generating MurNAc-6-P. Is required for the utilization of anhMurNAc either imported from the medium or derived from its own cell wall murein, and thus plays a role in cell wall recycling. This Bacillus cereus (strain 03BB102) protein is Anhydro-N-acetylmuramic acid kinase.